The following is a 500-amino-acid chain: Cytochrome P450 11B3, mitochondrial (500 aa).

Residues 1-24 (MALRVTADVWLARPWQCLHRTRAL) constitute a mitochondrion transit peptide. Residue cysteine 447 coordinates heme.

Belongs to the cytochrome P450 family. It depends on heme as a cofactor. In terms of tissue distribution, expressed in the adrenal cortex and in different brain tissues, including hippocampus, hypothalamus, cerebellum, cerebral cortex, and midbrain.

It localises to the mitochondrion membrane. The enzyme catalyses a steroid + 2 reduced [adrenodoxin] + O2 + 2 H(+) = an 11beta-hydroxysteroid + 2 oxidized [adrenodoxin] + H2O. The catalysed reaction is 21-hydroxyprogesterone + 2 reduced [adrenodoxin] + O2 + 2 H(+) = corticosterone + 2 oxidized [adrenodoxin] + H2O. It catalyses the reaction 21-hydroxyprogesterone + 2 reduced [adrenodoxin] + O2 + 2 H(+) = 18-hydroxy-11-deoxycorticosterone + 2 oxidized [adrenodoxin] + H2O. It carries out the reaction 21-hydroxyprogesterone + 2 reduced [adrenodoxin] + O2 + 2 H(+) = 19-hydroxy-11-deoxycorticosterone + 2 oxidized [adrenodoxin] + H2O. Its function is as follows. A cytochrome P450 monooxygenase involved in the biosynthesis of adrenal corticoids. Catalyzes the hydroxylation of steroids at 11beta, 18- or 19-positions, with preferred regioselectivity at 11beta and 18. Converts 11-deoxycorticosterone into corticosterone, 18-hydroxy-11-deoxycorticosterone, and/or 19-hydroxy-11-deoxycorticosterone, but not to 18-hydroxycorticosterone or aldosterone. Mechanistically, uses molecular oxygen inserting one oxygen atom into a substrate for hydroxylation and reducing the second into a water molecule. Two electrons are provided by NADPH via a two-protein mitochondrial transfer system comprising flavoprotein FDXR (adrenodoxin/ferredoxin reductase) and nonheme iron-sulfur protein FDX1 or FDX2 (adrenodoxin/ferredoxin). This chain is Cytochrome P450 11B3, mitochondrial (Cyp11b3), found in Rattus norvegicus (Rat).